Consider the following 229-residue polypeptide: MQPLEVGLVPAPAGEPRLTRWLRRGSGILAHLVALGFTIFLTALSRPGTSLFSWHPVFMALAFCLCMAEAILLFSPEHSLFFFCSRKARIRLHWAGQTLAILCAALGLGFIISSRTRSELPHLVSWHSWVGALTLLATAVQALCGLCLLCPRAARVSRVARLKLYHLTCGLVVYLMATVTVLLGMYSVWFQAQIKGAAWYLCLALPVYPALVIMHQISRSYLPRKKMEM.

Residues 1-24 (MQPLEVGLVPAPAGEPRLTRWLRR) are Cytoplasmic-facing. One can recognise a Cytochrome b561 domain in the interval 22–224 (LRRGSGILAH…HQISRSYLPR (203 aa)). A helical membrane pass occupies residues 25-45 (GSGILAHLVALGFTIFLTALS). Over 46-53 (RPGTSLFS) the chain is Lumenal. The helical transmembrane segment at 54-74 (WHPVFMALAFCLCMAEAILLF) threads the bilayer. His-55 contacts heme b. Over 75 to 91 (SPEHSLFFFCSRKARIR) the chain is Cytoplasmic. A helical membrane pass occupies residues 92 to 112 (LHWAGQTLAILCAALGLGFII). 2 residues coordinate heme b: His-93 and His-127. The Lumenal segment spans residues 113-128 (SSRTRSELPHLVSWHS). Residues 129–149 (WVGALTLLATAVQALCGLCLL) traverse the membrane as a helical segment. Residues 150–169 (CPRAARVSRVARLKLYHLTC) lie on the Cytoplasmic side of the membrane. Position 166 (His-166) interacts with heme b. Residues 170–190 (GLVVYLMATVTVLLGMYSVWF) form a helical membrane-spanning segment. The Lumenal segment spans residues 191-193 (QAQ). Residues 194–214 (IKGAAWYLCLALPVYPALVIM) form a helical membrane-spanning segment. The Cytoplasmic portion of the chain corresponds to 215–229 (HQISRSYLPRKKMEM).

The cofactor is heme b.

The protein localises to the membrane. The catalysed reaction is monodehydro-L-ascorbate radical(out) + L-ascorbate(in) = monodehydro-L-ascorbate radical(in) + L-ascorbate(out). The enzyme catalyses Fe(3+)(out) + L-ascorbate(in) = monodehydro-L-ascorbate radical(in) + Fe(2+)(out) + H(+). Probable transmembrane reductase that may use ascorbate as an electron donor and transfer electrons across membranes to reduce monodehydro-L-ascorbate radical and iron cations Fe(3+) in another cellular compartment. This is Probable transmembrane reductase CYB561D1 from Homo sapiens (Human).